A 472-amino-acid chain; its full sequence is Alanine--anticapsin ligase (472 aa).

Glutamate 109 serves as a coordination point for Mg(2+). The ATP site is built by lysine 138 and lysine 178. In terms of domain architecture, ATP-grasp spans 142 to 355 (RDAFNKAGVK…MAQLLLDVLC (214 aa)). Position 182 (leucine 182) interacts with Mg(2+). ATP contacts are provided by residues 184-185 (SS), 226-229 (EEFL), and glutamine 268. Substrate is bound by residues glutamate 273 and 309 to 311 (HTE). Residues glutamate 311 and glutamate 324 each coordinate Mg(2+). Substrate is bound at residue 328 to 331 (RFAG).

Monomer or homodimer. It depends on Mg(2+) as a cofactor.

It catalyses the reaction L-anticapsin + L-alanine + ATP = bacilysin + ADP + phosphate + H(+). The protein operates within antibiotic biosynthesis; bacilysin biosynthesis. In terms of biological role, part of the bacABCDEFG operon responsible for the biosynthesis of bacilysin, an irreversible inactivator of the glutaminase domain of glucosamine synthetase. Catalyzes the formation of alpha-dipeptides from various L-amino acids in the presence of ATP. In vivo catalyzes the ligation of L-alanine and L-anticapsin (epoxycyclohexanonyl-Ala) to produce the final bacilysin antibiotic (L-Ala-L-4S-cyclohexenonyl-Ala dipeptide). The substrate specificity is restricted to small amino acids such as L-Ala, for the N-terminal end of the dipeptide, whereas a wide range of hydrophobic amino acids such as L-Phe, L-Tyr and L-Met are recognized for the C-terminal end. This chain is Alanine--anticapsin ligase, found in Bacillus subtilis (strain 168).